The following is a 468-amino-acid chain: Probable Xaa-Pro aminopeptidase PEPP (468 aa).

Asp264, Asp275, Glu398, and Glu438 together coordinate Mn(2+).

It belongs to the peptidase M24B family. It depends on Mn(2+) as a cofactor.

It carries out the reaction Release of any N-terminal amino acid, including proline, that is linked to proline, even from a dipeptide or tripeptide.. Its function is as follows. Catalyzes the removal of a penultimate prolyl residue from the N-termini of peptides. The polypeptide is Probable Xaa-Pro aminopeptidase PEPP (PEPP) (Paracoccidioides lutzii (strain ATCC MYA-826 / Pb01) (Paracoccidioides brasiliensis)).